A 276-amino-acid chain; its full sequence is Type II pantothenate kinase (276 aa).

Position 8-15 (8-15 (DAGGTLTK)) interacts with ATP. The Proton acceptor role is filled by glutamate 76. ATP-binding positions include threonine 105, 127–131 (GGTIM), phenylalanine 143, and serine 230.

This sequence belongs to the type II pantothenate kinase family. In terms of assembly, homodimer.

The protein resides in the cytoplasm. The catalysed reaction is (R)-pantothenate + ATP = (R)-4'-phosphopantothenate + ADP + H(+). Its pathway is cofactor biosynthesis; coenzyme A biosynthesis; CoA from (R)-pantothenate: step 1/5. Its function is as follows. Catalyzes the phosphorylation of pantothenate (Pan), the first step in CoA biosynthesis. This chain is Type II pantothenate kinase, found in Bacillus cereus (strain ZK / E33L).